A 606-amino-acid polypeptide reads, in one-letter code: Elongation factor 4 (606 aa).

The tr-type G domain maps to 11–193 (PHIRNFSIIA…RLVRDVPPPK (183 aa)). Residues 23–28 (DHGKST) and 140–143 (NKMD) each bind GTP.

The protein belongs to the TRAFAC class translation factor GTPase superfamily. Classic translation factor GTPase family. LepA subfamily.

The protein localises to the cell inner membrane. The catalysed reaction is GTP + H2O = GDP + phosphate + H(+). Required for accurate and efficient protein synthesis under certain stress conditions. May act as a fidelity factor of the translation reaction, by catalyzing a one-codon backward translocation of tRNAs on improperly translocated ribosomes. Back-translocation proceeds from a post-translocation (POST) complex to a pre-translocation (PRE) complex, thus giving elongation factor G a second chance to translocate the tRNAs correctly. Binds to ribosomes in a GTP-dependent manner. The protein is Elongation factor 4 of Chromohalobacter salexigens (strain ATCC BAA-138 / DSM 3043 / CIP 106854 / NCIMB 13768 / 1H11).